The primary structure comprises 221 residues: Urease accessory protein UreF (221 aa).

It belongs to the UreF family. UreD, UreF and UreG form a complex that acts as a GTP-hydrolysis-dependent molecular chaperone, activating the urease apoprotein by helping to assemble the nickel containing metallocenter of UreC. The UreE protein probably delivers the nickel.

It localises to the cytoplasm. Functionally, required for maturation of urease via the functional incorporation of the urease nickel metallocenter. This Aliivibrio fischeri (strain MJ11) (Vibrio fischeri) protein is Urease accessory protein UreF.